The primary structure comprises 300 residues: Protoheme IX farnesyltransferase (300 aa).

Helical transmembrane passes span 26 to 46 (VVQL…PGLP), 54 to 74 (IAWA…FNCI), 102 to 122 (LLFS…LVNP), 123 to 143 (LTMW…TLIL), 150 to 170 (NIVI…AAMT), 177 to 197 (ALIL…ALAL), 224 to 244 (VLLY…YGMS), 246 to 266 (WPYL…GFAL), and 279 to 299 (FRFS…DHYL).

This sequence belongs to the UbiA prenyltransferase family. Protoheme IX farnesyltransferase subfamily.

It localises to the cell inner membrane. The catalysed reaction is heme b + (2E,6E)-farnesyl diphosphate + H2O = Fe(II)-heme o + diphosphate. It participates in porphyrin-containing compound metabolism; heme O biosynthesis; heme O from protoheme: step 1/1. In terms of biological role, converts heme B (protoheme IX) to heme O by substitution of the vinyl group on carbon 2 of heme B porphyrin ring with a hydroxyethyl farnesyl side group. The protein is Protoheme IX farnesyltransferase of Verminephrobacter eiseniae (strain EF01-2).